Here is a 104-residue protein sequence, read N- to C-terminus: L-rhamnose mutarotase (104 aa).

Tyr-18 is a binding site for substrate. Residue His-22 is the Proton donor of the active site. Substrate-binding positions include Tyr-41 and 76–77; that span reads WW.

Belongs to the rhamnose mutarotase family. Homodimer.

The protein localises to the cytoplasm. The enzyme catalyses alpha-L-rhamnose = beta-L-rhamnose. It participates in carbohydrate metabolism; L-rhamnose metabolism. In terms of biological role, involved in the anomeric conversion of L-rhamnose. The chain is L-rhamnose mutarotase from Salmonella heidelberg (strain SL476).